A 281-amino-acid chain; its full sequence is Clc-like protein 5 (281 aa).

4 helical membrane passes run 13-33 (LATL…TITP), 104-124 (VLIL…AVIF), 137-157 (IMLD…LIVF), and 184-204 (YYLA…AALV).

The protein belongs to the Clc family.

Its subcellular location is the membrane. The sequence is that of Clc-like protein 5 (clc-5) from Caenorhabditis elegans.